Consider the following 665-residue polypeptide: Anaphase-promoting complex subunit 3 (665 aa).

The TPR 1 repeat unit spans residues 115–148 (SCMLDVLGTMYKKAGFLKKATDCFVEAVSINPYN). The DNA-binding element occupies 191 to 257 (VPEPSFLKKS…HQSLKLQSQS (67 aa)). 8 TPR repeats span residues 329-362 (LLKL…QQNT), 363-396 (PFVL…SPSR), 431-464 (PESW…DPTF), 466-498 (YAYT…NVRH), 499-532 (YNAW…NPNN), 534-566 (VLIT…DEKS), 568-600 (LARF…APDE), and 601-634 (ANVH…DGKA).

This sequence belongs to the APC3/CDC27 family. As to quaternary structure, the APC/C is composed of at least 13 subunits: apc1, apc2, nuc2, apc4, apc5, cut9, apc8, apc10, apc11, hcn1, apc13, apc14 and apc15. Interacts with apc10 and cut9.

It localises to the nucleus. Functionally, component of the anaphase-promoting complex/cyclosome (APC/C), a cell cycle-regulated E3 ubiquitin-protein ligase complex that controls progression through mitosis and the G1 phase of the cell cycle. The APC/C is thought to confer substrate specificity and, in the presence of ubiquitin-conjugating E2 enzymes, it catalyzes the formation of protein-ubiquitin conjugates that are subsequently degraded by the 26S proteasome. Interacts with spindle apparatus, chromosomes, or nuclear envelope, and interconnect nuclear and cytoskeletal functions in mitosis, so the elongation of the spindle in anaphase is blocked. The protein is Anaphase-promoting complex subunit 3 (nuc2) of Schizosaccharomyces pombe (strain 972 / ATCC 24843) (Fission yeast).